Reading from the N-terminus, the 314-residue chain is Olfactory receptor 52K1 (314 aa).

Over 1–27 (MLPSNITSTHPAVFLLVGIPGLEHLHA) the chain is Extracellular. Asn-5 carries an N-linked (GlcNAc...) asparagine glycan. A helical transmembrane segment spans residues 28–48 (WISIPFCFAYTLALLGNCTLL). Residues 49 to 56 (FIIQADAA) lie on the Cytoplasmic side of the membrane. Residues 57–77 (LHEPMYLFLAMLATIDLVLSS) form a helical membrane-spanning segment. Residues 78–101 (TTLPKMLAIFWFRDQEINFFACLV) lie on the Extracellular side of the membrane. Cys-99 and Cys-191 are joined by a disulfide. Residues 102-122 (QMFFLHSFSIMESAVLLAMAF) traverse the membrane as a helical segment. Over 123–141 (DRYVAICKPLHYTTVLTGS) the chain is Cytoplasmic. Residues 142–162 (LITKIGMAAVARAVTLMTPLP) traverse the membrane as a helical segment. The Extracellular portion of the chain corresponds to 163–198 (FLLRRFHYCRGPVIAHCYCEHMAVVRLACGDTSFNN). A helical membrane pass occupies residues 199-219 (IYGIAVAMFIVVLDLLFVILS). Topologically, residues 220–239 (YVFILQAVLQLASQEARYKA) are cytoplasmic. A helical membrane pass occupies residues 240–260 (FGTCVSHIGAILSTYTPVVIS). At 261–275 (SVMHRVARHAAPRVH) the chain is on the extracellular side. A helical membrane pass occupies residues 276 to 296 (ILLAIFYLLFPPMVNPIIYGV). Residues 297 to 314 (KTKQIREYVLSLFQRKNM) lie on the Cytoplasmic side of the membrane.

The protein belongs to the G-protein coupled receptor 1 family.

The protein resides in the cell membrane. Functionally, odorant receptor. This chain is Olfactory receptor 52K1 (OR52K1), found in Homo sapiens (Human).